Here is a 49-residue protein sequence, read N- to C-terminus: Large ribosomal subunit protein bL33B (49 aa).

The protein belongs to the bacterial ribosomal protein bL33 family.

This is Large ribosomal subunit protein bL33B from Listeria welshimeri serovar 6b (strain ATCC 35897 / DSM 20650 / CCUG 15529 / CIP 8149 / NCTC 11857 / SLCC 5334 / V8).